The sequence spans 69 residues: MNSGTVKWFNSTKGFGFIQPDDGATDVFVHASAVERAGMRSLVEGQKVTYDIVRDTKSGKSSADNLRAA.

Residues 4 to 66 (GTVKWFNSTK…KSGKSSADNL (63 aa)) enclose the CSD domain.

The protein localises to the cytoplasm. This chain is Cold shock protein CspA (cspA), found in Rhizobium meliloti (strain 1021) (Ensifer meliloti).